The sequence spans 94 residues: Pyrimidine/purine nucleoside phosphorylase (94 aa).

The protein belongs to the nucleoside phosphorylase PpnP family.

The enzyme catalyses a purine D-ribonucleoside + phosphate = a purine nucleobase + alpha-D-ribose 1-phosphate. It carries out the reaction adenosine + phosphate = alpha-D-ribose 1-phosphate + adenine. The catalysed reaction is cytidine + phosphate = cytosine + alpha-D-ribose 1-phosphate. It catalyses the reaction guanosine + phosphate = alpha-D-ribose 1-phosphate + guanine. The enzyme catalyses inosine + phosphate = alpha-D-ribose 1-phosphate + hypoxanthine. It carries out the reaction thymidine + phosphate = 2-deoxy-alpha-D-ribose 1-phosphate + thymine. The catalysed reaction is uridine + phosphate = alpha-D-ribose 1-phosphate + uracil. It catalyses the reaction xanthosine + phosphate = alpha-D-ribose 1-phosphate + xanthine. Functionally, catalyzes the phosphorolysis of diverse nucleosides, yielding D-ribose 1-phosphate and the respective free bases. Can use uridine, adenosine, guanosine, cytidine, thymidine, inosine and xanthosine as substrates. Also catalyzes the reverse reactions. This chain is Pyrimidine/purine nucleoside phosphorylase, found in Escherichia coli (strain ATCC 8739 / DSM 1576 / NBRC 3972 / NCIMB 8545 / WDCM 00012 / Crooks).